A 345-amino-acid polypeptide reads, in one-letter code: Arginase (345 aa).

The span at Met1–Ser16 shows a compositional bias: basic and acidic residues. The segment at Met1–Phe34 is disordered. Mn(2+) contacts are provided by Ile101, His124, Ser126, Gly128, Ile232, and Cys234.

The protein belongs to the arginase family. As to quaternary structure, homotrimer. It depends on Mn(2+) as a cofactor.

It catalyses the reaction L-arginine + H2O = urea + L-ornithine. Its pathway is nitrogen metabolism; urea cycle; L-ornithine and urea from L-arginine: step 1/1. The enzyme activity is increased in the range of 20-50% upon the addition of Mn(2+) (1 mM), Co(2+) (1 mM), Ni(2+) (1 and 5 mM) and K(+) (5 mM). In contrast, the addition of Cu(2+), Zn(2+), Ca(2+), Mg(2+), Fe(2+) (both 1 and 5 mM), and Co(2+) (5 mM) strongly suppresses the arginase activity. SDS (1%) and EDTA (1 mM) are the most potent inhibitors. Reducing agents DTT (1 mM), PMSF (1 mM) and beta-mercaptoethanol (1 mM) also significantly inhibit activity by 85%, 64% and 35%, respectively. Surfactants Triton X-100 (1%), Tween-80 (1%) and Tween-20 (1%) are more tolerant, showing a slight decrease of arginase activity in the range of 10-30%. Functionally, cold-active L-arginase that catalyzes the hydrolysis of L-arginine to L-ornithine and urea, an essential reaction in the urea cycle for toxic ammonia removal and cell proliferation. Is not able to use D-arginine or L-canavanine as substrates. The polypeptide is Arginase (Glaciozyma antarctica (strain PI12) (Antarctic psychrophilic yeast)).